Reading from the N-terminus, the 155-residue chain is E3 ubiquitin-protein ligase RHA2A (155 aa).

Residues 86–128 form an RING-type; atypical zinc finger; the sequence is CVVCLSKLKEGEEVRKLECRHVFHKKCLEGWLHQFNFTCPLCR.

As to quaternary structure, interacts with NAC019 and NAC055. As to expression, expressed in stems, flowers, cauline leaves, rosettes, siliques, seeds and roots.

The protein resides in the cytoplasm. The protein localises to the nucleus. It catalyses the reaction S-ubiquitinyl-[E2 ubiquitin-conjugating enzyme]-L-cysteine + [acceptor protein]-L-lysine = [E2 ubiquitin-conjugating enzyme]-L-cysteine + N(6)-ubiquitinyl-[acceptor protein]-L-lysine.. It participates in protein modification; protein ubiquitination. Its function is as follows. E3 ubiquitin-protein ligase involved in the positive regulation of abscisic acid (ABA) signaling and responses to salt and osmotic stresses during seed germination and early seedling development. Acts additively with RHA2B in regulating ABA signaling and drought response. Possesses E3 ubiquitin ligase activity in vitro. This chain is E3 ubiquitin-protein ligase RHA2A, found in Arabidopsis thaliana (Mouse-ear cress).